Reading from the N-terminus, the 610-residue chain is Methionine--tRNA ligase (610 aa).

Positions 12-22 (PYANGPRHIGH) match the 'HIGH' region motif. The Zn(2+) site is built by Cys-144, Cys-147, Cys-157, and Cys-160. The 'KMSKS' region motif lies at 348 to 352 (KFSSS). Position 351 (Ser-351) interacts with ATP.

This sequence belongs to the class-I aminoacyl-tRNA synthetase family. MetG type 1 subfamily. As to quaternary structure, monomer. It depends on Zn(2+) as a cofactor.

The protein resides in the cytoplasm. It catalyses the reaction tRNA(Met) + L-methionine + ATP = L-methionyl-tRNA(Met) + AMP + diphosphate. Functionally, is required not only for elongation of protein synthesis but also for the initiation of all mRNA translation through initiator tRNA(fMet) aminoacylation. In Corynebacterium glutamicum (strain R), this protein is Methionine--tRNA ligase.